Reading from the N-terminus, the 410-residue chain is Probable protein S-acyltransferase 6 (410 aa).

Transmembrane regions (helical) follow at residues 45-65 (LGLT…FVAS) and 76-96 (GVSI…LLML). Residues 108-129 (NSHPPEPEVVDGNTGSGTSQTP) are disordered. The DHHC domain maps to 147 to 197 (KYCDTCMLYRPPRCSHCSICNNCVERFDHHCPWVGQCIAQRNYRFFFMFVF). The S-palmitoyl cysteine intermediate role is filled by C177. Transmembrane regions (helical) follow at residues 191-211 (FFFM…AFCC) and 235-255 (SIAL…LTCF). S325 bears the Phosphoserine mark.

The protein belongs to the DHHC palmitoyltransferase family.

Its subcellular location is the cell membrane. It catalyses the reaction L-cysteinyl-[protein] + hexadecanoyl-CoA = S-hexadecanoyl-L-cysteinyl-[protein] + CoA. Palmitoyl acyltransferase. The polypeptide is Probable protein S-acyltransferase 6 (PAT06) (Arabidopsis thaliana (Mouse-ear cress)).